A 178-amino-acid chain; its full sequence is Nicotinamide-nucleotide adenylyltransferase (178 aa).

It belongs to the archaeal NMN adenylyltransferase family.

Its subcellular location is the cytoplasm. It catalyses the reaction beta-nicotinamide D-ribonucleotide + ATP + H(+) = diphosphate + NAD(+). It participates in cofactor biosynthesis; NAD(+) biosynthesis; NAD(+) from nicotinamide D-ribonucleotide: step 1/1. The polypeptide is Nicotinamide-nucleotide adenylyltransferase (Pyrobaculum aerophilum (strain ATCC 51768 / DSM 7523 / JCM 9630 / CIP 104966 / NBRC 100827 / IM2)).